Here is a 199-residue protein sequence, read N- to C-terminus: Adenylyl-sulfate kinase (199 aa).

Glycine 34–serine 41 is an ATP binding site. Serine 108 (phosphoserine intermediate) is an active-site residue.

It belongs to the APS kinase family.

The catalysed reaction is adenosine 5'-phosphosulfate + ATP = 3'-phosphoadenylyl sulfate + ADP + H(+). The protein operates within sulfur metabolism; hydrogen sulfide biosynthesis; sulfite from sulfate: step 2/3. Its function is as follows. Catalyzes the synthesis of activated sulfate. This is Adenylyl-sulfate kinase from Staphylococcus carnosus (strain TM300).